The following is a 365-amino-acid chain: 2-aminoethylphosphonate--pyruvate transaminase (365 aa).

The residue at position 194 (Lys194) is an N6-(pyridoxal phosphate)lysine.

It belongs to the class-V pyridoxal-phosphate-dependent aminotransferase family. PhnW subfamily. In terms of assembly, homodimer. The cofactor is pyridoxal 5'-phosphate.

The catalysed reaction is (2-aminoethyl)phosphonate + pyruvate = phosphonoacetaldehyde + L-alanine. In terms of biological role, involved in phosphonate degradation. The sequence is that of 2-aminoethylphosphonate--pyruvate transaminase from Bacillus thuringiensis (strain Al Hakam).